We begin with the raw amino-acid sequence, 438 residues long: Putative truncated GMC-type inactive oxidoreductase L894 (438 aa).

Residues 1–26 (MYVFLLFSRYKIFYVYIKKMAHRSRC) form the signal peptide. 79-109 (DIVIIGAGAAGCVLAYYLTKFSDLKIILLEA) contacts FAD.

The protein belongs to the GMC oxidoreductase family. Requires FAD as cofactor.

The protein resides in the virion. This Acanthamoeba polyphaga (Amoeba) protein is Putative truncated GMC-type inactive oxidoreductase L894.